A 212-amino-acid polypeptide reads, in one-letter code: Thymidylate kinase (212 aa).

10 to 17 (GPEGAGKT) serves as a coordination point for ATP.

The protein belongs to the thymidylate kinase family.

The catalysed reaction is dTMP + ATP = dTDP + ADP. Functionally, phosphorylation of dTMP to form dTDP in both de novo and salvage pathways of dTTP synthesis. The chain is Thymidylate kinase from Bacillus pumilus (strain SAFR-032).